The chain runs to 397 residues: Gastric triacylglycerol lipase (397 aa).

The signal sequence occupies residues 1–19; sequence MWWLLVTVCFIHMSGNAFC. The N-linked (GlcNAc...) asparagine glycan is linked to Asn33. In terms of domain architecture, AB hydrolase-1 spans 77–376; it reads PVVFLQHGLL…PNYNHLDFIW (300 aa). The active-site Nucleophile is the Ser171. Cys245 and Cys254 are joined by a disulfide. N-linked (GlcNAc...) asparagine glycosylation is found at Asn270 and Asn326. Active-site charge relay system residues include Asp342 and His371.

Belongs to the AB hydrolase superfamily. Lipase family.

It is found in the secreted. The catalysed reaction is a triacylglycerol + H2O = a diacylglycerol + a fatty acid + H(+). The enzyme catalyses 1,2,3-tri-(9Z-octadecenoyl)-glycerol + H2O = 1,2-di-(9Z-octadecenoyl)-sn-glycerol + (9Z)-octadecenoate + H(+). It catalyses the reaction 1,2,3-trioctanoylglycerol + H2O = 1,2-dioctanoyl-sn-glycerol + octanoate + H(+). Inhibited by diethylp-nitrophenyl phosphate but not inhibited by thiol reagents 5,5'-dithiobis(2-nitrobenzoic acid) or 4,4'-dithiopyridine. Its function is as follows. Catalyzes the hydrolysis of triacylglycerols to yield free fatty acids, diacylglycerol, monoacylglycerol, and glycerol. Shows a preferential hydrolysis at the sn-3 position of triacylglycerol. The protein is Gastric triacylglycerol lipase (LIPF) of Bos taurus (Bovine).